A 143-amino-acid chain; its full sequence is Transcriptional regulator MraZ (143 aa).

SpoVT-AbrB domains follow at residues 5-47 (TYAP…SQRE) and 76-119 (ASAE…DAEA).

Belongs to the MraZ family. As to quaternary structure, forms oligomers.

It is found in the cytoplasm. The protein resides in the nucleoid. This chain is Transcriptional regulator MraZ, found in Leifsonia xyli subsp. xyli (strain CTCB07).